A 357-amino-acid chain; its full sequence is DNA replication and repair protein RecF (357 aa).

Residue 30-37 (GANGSGKT) participates in ATP binding.

The protein belongs to the RecF family.

The protein resides in the cytoplasm. In terms of biological role, the RecF protein is involved in DNA metabolism; it is required for DNA replication and normal SOS inducibility. RecF binds preferentially to single-stranded, linear DNA. It also seems to bind ATP. The chain is DNA replication and repair protein RecF from Escherichia coli O6:K15:H31 (strain 536 / UPEC).